A 466-amino-acid polypeptide reads, in one-letter code: Adenosylhomocysteinase (466 aa).

Substrate-binding residues include threonine 57, aspartate 132, and glutamate 192. Residue 193–195 (TTT) coordinates NAD(+). Residues lysine 222 and aspartate 226 each coordinate substrate. Residues asparagine 227, 256 to 261 (GYGDVG), glutamate 279, asparagine 314, 335 to 337 (IGH), and asparagine 380 each bind NAD(+).

This sequence belongs to the adenosylhomocysteinase family. The cofactor is NAD(+).

Its subcellular location is the cytoplasm. It catalyses the reaction S-adenosyl-L-homocysteine + H2O = L-homocysteine + adenosine. Its pathway is amino-acid biosynthesis; L-homocysteine biosynthesis; L-homocysteine from S-adenosyl-L-homocysteine: step 1/1. Its function is as follows. May play a key role in the regulation of the intracellular concentration of adenosylhomocysteine. The chain is Adenosylhomocysteinase from Rhizobium rhizogenes (strain K84 / ATCC BAA-868) (Agrobacterium radiobacter).